The chain runs to 250 residues: uncharacterized protein (250 aa).

The segment at 182–205 (HTPIVSIQTPPPPAPTPNRPDVPA) is disordered. Over residues 190-201 (TPPPPAPTPNRP) the composition is skewed to pro residues. The helical transmembrane segment at 230–250 (TRISVIPLLSVLLLVIIIILL) threads the bilayer.

This sequence belongs to the ascovirus HvAV ORF18 family.

The protein resides in the membrane. This is an uncharacterized protein from Spodoptera frugiperda ascovirus 1a (SfAV-1a).